A 381-amino-acid chain; its full sequence is Guanine nucleotide-binding protein G(s) subunit alpha (381 aa).

Cysteine 3 carries the S-palmitoyl cysteine lipid modification. One can recognise a G-alpha domain in the interval 36 to 381; that stretch reads ALHRLLLLGA…RMHLQKYELL (346 aa). Positions 39–52 are G1 motif; that stretch reads RLLLLGAGESGKST. Residues 44–51, 183–189, 208–212, 277–280, and alanine 353 contribute to the GTP site; these read GAGESGKS, LRCRVLT, GVGGQ, and NKQD. Positions 51 and 189 each coordinate Mg(2+). The interval 181–189 is G2 motif; sequence DILRCRVLT. The segment at 204–213 is G3 motif; that stretch reads FYMFGVGGQR. The interval 273–280 is G4 motif; the sequence is ILFLNKQD. The tract at residues 351–356 is G5 motif; that stretch reads TTAVDT.

Belongs to the G-alpha family. G(s) subfamily. G proteins are composed of 3 units; alpha, beta and gamma. The alpha chain contains the guanine nucleotide binding site.

In terms of biological role, guanine nucleotide-binding proteins (G proteins) are involved as modulators or transducers in various transmembrane signaling systems. The G(s) protein is involved in hormonal regulation of adenylate cyclase: it activates the cyclase in response to beta-adrenergic stimuli. The sequence is that of Guanine nucleotide-binding protein G(s) subunit alpha from Geodia cydonium (Sponge).